The sequence spans 136 residues: MSQLVYFSSSSENTQRFIERLGLPAVRIPLNERERIQVDEPYILIVPSYGGGGTTGAVPRQVIRFLNDEHNRALLRGVIASGNRNFGEAYGRAGDVIARKCGVPWLYRFELMGTQSDIENVRKGVTEFWQRQPQNA.

This sequence belongs to the NrdI family.

Probably involved in ribonucleotide reductase function. The protein is Protein NrdI of Escherichia coli O7:K1 (strain IAI39 / ExPEC).